Consider the following 1266-residue polypeptide: Rho GTPase-activating protein 29 (1266 aa).

Phosphoserine occurs at positions 171, 176, 179, and 190. The region spanning 192-462 (IELDNLLLKN…SAKLYDPGQE (271 aa)) is the F-BAR domain. Residues 296 to 418 (RKNEMEKQRK…EILTQLRTLV (123 aa)) adopt a coiled-coil conformation. The tract at residues 482-501 (NVNKQMTNSPQTSGYEPADS) is disordered. Polar residues predominate over residues 483–495 (VNKQMTNSPQTSG). Ser-501, Ser-521, and Ser-554 each carry phosphoserine. The segment covering 542–561 (DSESTGGSSESRSLDSESIS) has biased composition (low complexity). The segment at 542 to 601 (DSESTGGSSESRSLDSESISPGDFHRKLPRTPSSGTMSSADDLDEREPPSPSEAGPNSLG) is disordered. Residues 614-659 (THKFRKLRSPTKCRDCDGIVMFPGVECEECLLVCHRKCLENLVIIC) form a Phorbol-ester/DAG-type zinc finger. In terms of domain architecture, Rho-GAP spans 673 to 888 (AEFIQVAKKE…FLITYSQKIF (216 aa)). 3 positions are modified to phosphoserine: Ser-920, Ser-956, and Ser-1028. Disordered stretches follow at residues 1039–1081 (SSPT…KVNG), 1116–1157 (GLTV…ATAV), and 1209–1266 (KSDP…PQFV). Polar residues predominate over residues 1072–1081 (SNTTRSKVNG). Positions 1124–1136 (NRDHPGSKAHAEP) are enriched in basic and acidic residues. 2 positions are modified to phosphoserine: Ser-1149 and Ser-1151. Over residues 1256–1266 (EDLEDEIPQFV) the composition is skewed to acidic residues. Residues 1263 to 1266 (PQFV) form an interaction with PTPN13/PTPL1 region.

Interacts with PTPN13/PTPL1. Interacts with RAP2A via its coiled coil domain. Interacts with RASIP1.

GTPase activator for the Rho-type GTPases by converting them to an inactive GDP-bound state. Has strong activity toward RHOA, and weaker activity toward RAC1 and CDC42. May act as a specific effector of RAP2A to regulate Rho. In concert with RASIP1, suppresses RhoA signaling and dampens ROCK and MYH9 activities in endothelial cells and plays an essential role in blood vessel tubulogenesis. The sequence is that of Rho GTPase-activating protein 29 (Arhgap29) from Mus musculus (Mouse).